The primary structure comprises 891 residues: DNA polymerase I (891 aa).

Residues 1 to 313 (MEQPVIKEGT…LLDNTPALDN (313 aa)) enclose the 5'-3' exonuclease domain. One can recognise a 3'-5' exonuclease domain in the interval 314–488 (TPKKSCMIVL…RLCEYFEKGG (175 aa)). Residues 492 to 890 (NLLSLAREIE…FIAKRWNELK (399 aa)) form a polymerase region.

The protein belongs to the DNA polymerase type-A family. In terms of assembly, single-chain monomer with multiple functions.

It carries out the reaction DNA(n) + a 2'-deoxyribonucleoside 5'-triphosphate = DNA(n+1) + diphosphate. In addition to polymerase activity, this DNA polymerase exhibits 3'-5' and 5'-3' exonuclease activity. The sequence is that of DNA polymerase I (polA) from Helicobacter pylori (strain ATCC 700392 / 26695) (Campylobacter pylori).